The following is a 425-amino-acid chain: Apolipoprotein N-acyltransferase (425 aa).

6 consecutive transmembrane segments (helical) span residues 12–32, 34–54, 60–80, 88–108, 120–140, and 142–162; these read LLAC…AYAI, NPYI…LAFL, SAFA…ALSF, LLPL…YLLL, FLGS…DSFF, and YSVF…CIFL. Positions 201–425 constitute a CN hydrolase domain; that stretch reads VSTKTPQDLK…LGDILFRKRS (225 aa). The active-site Proton acceptor is the glutamate 242. Lysine 296 is a catalytic residue. Catalysis depends on cysteine 349, which acts as the Nucleophile.

It belongs to the CN hydrolase family. Apolipoprotein N-acyltransferase subfamily.

The protein localises to the cell inner membrane. It catalyses the reaction N-terminal S-1,2-diacyl-sn-glyceryl-L-cysteinyl-[lipoprotein] + a glycerophospholipid = N-acyl-S-1,2-diacyl-sn-glyceryl-L-cysteinyl-[lipoprotein] + a 2-acyl-sn-glycero-3-phospholipid + H(+). It participates in protein modification; lipoprotein biosynthesis (N-acyl transfer). Its function is as follows. Catalyzes the phospholipid dependent N-acylation of the N-terminal cysteine of apolipoprotein, the last step in lipoprotein maturation. The polypeptide is Apolipoprotein N-acyltransferase (Helicobacter pylori (strain ATCC 700392 / 26695) (Campylobacter pylori)).